A 482-amino-acid polypeptide reads, in one-letter code: uncharacterized protein (482 aa).

2 stretches are compositionally biased toward low complexity: residues 24 to 86 (SPNS…AQQQ) and 312 to 339 (TDSLCSSSTSTPSFNSTSSSSKNQSQSI). Disordered regions lie at residues 24–88 (SPNS…QQHY) and 307–376 (LHSQ…LIGK). The segment covering 342–363 (EEEEDGGEDEEEEGGEDNDNES) has biased composition (acidic residues).

This is an uncharacterized protein from Dictyostelium discoideum (Social amoeba).